The primary structure comprises 339 residues: Glycerol-3-phosphate dehydrogenase [NAD(P)+] (339 aa).

Residues serine 15, tyrosine 16, histidine 36, and lysine 110 each coordinate NADPH. Residues lysine 110, glycine 139, and threonine 141 each coordinate sn-glycerol 3-phosphate. Position 143 (alanine 143) interacts with NADPH. Lysine 195, aspartate 248, serine 258, arginine 259, and asparagine 260 together coordinate sn-glycerol 3-phosphate. Lysine 195 serves as the catalytic Proton acceptor. Arginine 259 contacts NADPH. Positions 283 and 285 each coordinate NADPH.

It belongs to the NAD-dependent glycerol-3-phosphate dehydrogenase family.

Its subcellular location is the cytoplasm. The catalysed reaction is sn-glycerol 3-phosphate + NAD(+) = dihydroxyacetone phosphate + NADH + H(+). It catalyses the reaction sn-glycerol 3-phosphate + NADP(+) = dihydroxyacetone phosphate + NADPH + H(+). It functions in the pathway membrane lipid metabolism; glycerophospholipid metabolism. In terms of biological role, catalyzes the reduction of the glycolytic intermediate dihydroxyacetone phosphate (DHAP) to sn-glycerol 3-phosphate (G3P), the key precursor for phospholipid synthesis. This chain is Glycerol-3-phosphate dehydrogenase [NAD(P)+], found in Serratia proteamaculans (strain 568).